Here is a 325-residue protein sequence, read N- to C-terminus: H-2 class I histocompatibility antigen, Q10 alpha chain (325 aa).

An N-terminal signal peptide occupies residues 1 to 24; the sequence is MGAMAPRTLLLLLAAALAPTQTQA. An alpha-1 region spans residues 25–114; sequence GSHSMRYFET…LLGYYNQSES (90 aa). Residues 25-310 lie on the Extracellular side of the membrane; it reads GSHSMRYFET…PPSTDSIMSH (286 aa). Asn-110 carries an N-linked (GlcNAc...) asparagine glycan. The segment at 115–206 is alpha-2; the sequence is GSHTIQWMYG…ELGKETLLRT (92 aa). 2 cysteine pairs are disulfide-bonded: Cys-125–Cys-188 and Cys-227–Cys-283. The tract at residues 207 to 298 is alpha-3; sequence DPPKTHVTHH…GLPEPLTLRW (92 aa). Residues 209–297 form the Ig-like C1-type domain; the sequence is PKTHVTHHPG…EGLPEPLTLR (89 aa). Residue Asn-280 is glycosylated (N-linked (GlcNAc...) asparagine). Residues 299-310 are connecting peptide; that stretch reads EPPPSTDSIMSH. A helical membrane pass occupies residues 311 to 324; it reads IADLLWPSLKLWWY.

The protein belongs to the MHC class I family. In terms of assembly, heterodimer of an alpha chain and a beta chain (beta-2-microglobulin).

It localises to the membrane. Involved in the presentation of foreign antigens to the immune system. The chain is H-2 class I histocompatibility antigen, Q10 alpha chain (H2-Q10) from Mus musculus (Mouse).